The sequence spans 283 residues: Pantothenate synthetase (283 aa).

Residue 30–37 (MGALHEGH) coordinates ATP. The Proton donor role is filled by His37. Gln61 contacts (R)-pantoate. Beta-alanine is bound at residue Gln61. Position 147–150 (147–150 (GEKD)) interacts with ATP. Gln153 lines the (R)-pantoate pocket. Residues Ile176 and 184–187 (VSSR) contribute to the ATP site.

It belongs to the pantothenate synthetase family. As to quaternary structure, homodimer.

The protein localises to the cytoplasm. The catalysed reaction is (R)-pantoate + beta-alanine + ATP = (R)-pantothenate + AMP + diphosphate + H(+). It functions in the pathway cofactor biosynthesis; (R)-pantothenate biosynthesis; (R)-pantothenate from (R)-pantoate and beta-alanine: step 1/1. Its function is as follows. Catalyzes the condensation of pantoate with beta-alanine in an ATP-dependent reaction via a pantoyl-adenylate intermediate. The sequence is that of Pantothenate synthetase from Pelodictyon phaeoclathratiforme (strain DSM 5477 / BU-1).